We begin with the raw amino-acid sequence, 168 residues long: Large ribosomal subunit protein uL10 (168 aa).

Belongs to the universal ribosomal protein uL10 family. As to quaternary structure, part of the ribosomal stalk of the 50S ribosomal subunit. The N-terminus interacts with L11 and the large rRNA to form the base of the stalk. The C-terminus forms an elongated spine to which L12 dimers bind in a sequential fashion forming a multimeric L10(L12)X complex.

Functionally, forms part of the ribosomal stalk, playing a central role in the interaction of the ribosome with GTP-bound translation factors. The polypeptide is Large ribosomal subunit protein uL10 (Photorhabdus laumondii subsp. laumondii (strain DSM 15139 / CIP 105565 / TT01) (Photorhabdus luminescens subsp. laumondii)).